The sequence spans 435 residues: 5-methylthioadenosine/S-adenosylhomocysteine deaminase (435 aa).

2 residues coordinate Zn(2+): His-65 and His-67. Residues Glu-94, Arg-150, and His-189 each coordinate substrate. A Zn(2+)-binding site is contributed by His-216. 2 residues coordinate substrate: Glu-219 and Asp-304. Asp-304 provides a ligand contact to Zn(2+).

Belongs to the metallo-dependent hydrolases superfamily. MTA/SAH deaminase family. The cofactor is Zn(2+).

The enzyme catalyses S-adenosyl-L-homocysteine + H2O + H(+) = S-inosyl-L-homocysteine + NH4(+). The catalysed reaction is S-methyl-5'-thioadenosine + H2O + H(+) = S-methyl-5'-thioinosine + NH4(+). Catalyzes the deamination of 5-methylthioadenosine and S-adenosyl-L-homocysteine into 5-methylthioinosine and S-inosyl-L-homocysteine, respectively. Is also able to deaminate adenosine. This chain is 5-methylthioadenosine/S-adenosylhomocysteine deaminase, found in Bacillus cereus (strain AH187).